A 291-amino-acid chain; its full sequence is Pantothenate synthetase (291 aa).

Residue 30 to 37 participates in ATP binding; it reads MGYLHAGH. H37 functions as the Proton donor in the catalytic mechanism. Residue Q61 coordinates (R)-pantoate. Q61 contacts beta-alanine. Residue 147–150 participates in ATP binding; the sequence is GEKD. (R)-pantoate is bound at residue Q153. ATP contacts are provided by residues V176 and 184–187; that span reads LSSR.

Belongs to the pantothenate synthetase family. In terms of assembly, homodimer.

Its subcellular location is the cytoplasm. It carries out the reaction (R)-pantoate + beta-alanine + ATP = (R)-pantothenate + AMP + diphosphate + H(+). It participates in cofactor biosynthesis; (R)-pantothenate biosynthesis; (R)-pantothenate from (R)-pantoate and beta-alanine: step 1/1. Catalyzes the condensation of pantoate with beta-alanine in an ATP-dependent reaction via a pantoyl-adenylate intermediate. This chain is Pantothenate synthetase, found in Rhizobium rhizogenes (strain K84 / ATCC BAA-868) (Agrobacterium radiobacter).